Here is an 80-residue protein sequence, read N- to C-terminus: U20-ctenitoxin-Pn1a (80 aa).

7 disulfides stabilise this stretch: C3–C20, C10–C26, C17–C52, C19–C40, C28–C38, C58–C71, and C75–C80.

As to expression, expressed by the venom gland.

It is found in the secreted. Omega-agatoxin are antagonists of voltage-gated calcium channels (Cav). Induces rapid general flaccid paralysis followed by death when injected into the cerebral ventricle of mice at dose levels of 3 ug per mouse. The chain is U20-ctenitoxin-Pn1a from Phoneutria nigriventer (Brazilian armed spider).